Reading from the N-terminus, the 223-residue chain is Phosphoribosylformylglycinamidine synthase subunit PurQ (223 aa).

The 221-residue stretch at 3–223 (SAVILLPGLN…LFAGALGITA (221 aa)) folds into the Glutamine amidotransferase type-1 domain. The active-site Nucleophile is cysteine 87. Residues histidine 197 and glutamate 199 contribute to the active site.

As to quaternary structure, part of the FGAM synthase complex composed of 1 PurL, 1 PurQ and 2 PurS subunits.

It is found in the cytoplasm. It catalyses the reaction N(2)-formyl-N(1)-(5-phospho-beta-D-ribosyl)glycinamide + L-glutamine + ATP + H2O = 2-formamido-N(1)-(5-O-phospho-beta-D-ribosyl)acetamidine + L-glutamate + ADP + phosphate + H(+). It carries out the reaction L-glutamine + H2O = L-glutamate + NH4(+). The protein operates within purine metabolism; IMP biosynthesis via de novo pathway; 5-amino-1-(5-phospho-D-ribosyl)imidazole from N(2)-formyl-N(1)-(5-phospho-D-ribosyl)glycinamide: step 1/2. Functionally, part of the phosphoribosylformylglycinamidine synthase complex involved in the purines biosynthetic pathway. Catalyzes the ATP-dependent conversion of formylglycinamide ribonucleotide (FGAR) and glutamine to yield formylglycinamidine ribonucleotide (FGAM) and glutamate. The FGAM synthase complex is composed of three subunits. PurQ produces an ammonia molecule by converting glutamine to glutamate. PurL transfers the ammonia molecule to FGAR to form FGAM in an ATP-dependent manner. PurS interacts with PurQ and PurL and is thought to assist in the transfer of the ammonia molecule from PurQ to PurL. The chain is Phosphoribosylformylglycinamidine synthase subunit PurQ from Brucella suis biovar 1 (strain 1330).